Reading from the N-terminus, the 504-residue chain is Probable cytosol aminopeptidase (504 aa).

The Mn(2+) site is built by Lys276 and Asp281. Lys288 is an active-site residue. Mn(2+) contacts are provided by Asp299, Asp358, and Glu360. Arg362 is a catalytic residue.

The protein belongs to the peptidase M17 family. Requires Mn(2+) as cofactor.

Its subcellular location is the cytoplasm. The catalysed reaction is Release of an N-terminal amino acid, Xaa-|-Yaa-, in which Xaa is preferably Leu, but may be other amino acids including Pro although not Arg or Lys, and Yaa may be Pro. Amino acid amides and methyl esters are also readily hydrolyzed, but rates on arylamides are exceedingly low.. It catalyses the reaction Release of an N-terminal amino acid, preferentially leucine, but not glutamic or aspartic acids.. Its function is as follows. Presumably involved in the processing and regular turnover of intracellular proteins. Catalyzes the removal of unsubstituted N-terminal amino acids from various peptides. The sequence is that of Probable cytosol aminopeptidase from Bordetella avium (strain 197N).